Consider the following 963-residue polypeptide: Phosphoenolpyruvate carboxylase (963 aa).

A Phosphoserine modification is found at Ser-11. Residues His-172 and Lys-600 contribute to the active site.

This sequence belongs to the PEPCase type 1 family. As to quaternary structure, homotetramer. Requires Mg(2+) as cofactor.

It is found in the cytoplasm. The enzyme catalyses oxaloacetate + phosphate = phosphoenolpyruvate + hydrogencarbonate. By light-reversible phosphorylation. Its function is as follows. Through the carboxylation of phosphoenolpyruvate (PEP) it forms oxaloacetate, a four-carbon dicarboxylic acid source for the tricarboxylic acid cycle. The chain is Phosphoenolpyruvate carboxylase (PPC) from Picea abies (Norway spruce).